The following is a 316-amino-acid chain: Epoxide hydrolase 3 (316 aa).

Residues 25–302 (PVVLLLHGFP…ACHFINQERP (278 aa)) enclose the AB hydrolase-1 domain. The active-site Nucleophile is the aspartate 101. Tyrosine 150 contacts an epoxide. Catalysis depends on tyrosine 230, which acts as the Proton donor. The active-site Proton acceptor is histidine 295.

Belongs to the AB hydrolase superfamily. Epoxide hydrolase family. In terms of assembly, homodimer. In terms of tissue distribution, highly expressed in young fruits 15 days after anthesis (15-DAA).

It carries out the reaction an epoxide + H2O = an ethanediol. The enzyme catalyses (24S)-24,25-epoxycucurbitadienol + H2O = (24R)-24,25-dihydroxycucurbitadienol. It participates in secondary metabolite biosynthesis; terpenoid biosynthesis. Its function is as follows. Epoxide hydrolase involved in the biosynthesis of cucurbitacin and mogroside tetracyclic triterpene natural products (e.g. siamenoside I and mogrosides IV, V and VI). Cucurbitacins have cytotoxic properties and exhibit deterrent taste as a defense barrier against herbivores. Mogrosides are nonsugar highly oxygenated compounds used as high-intensity zero-calorie sweeteners; they also possess pharmacological properties such as regulating immunity, lowering blood sugar and lipid levels, protecting the liver, and acting as antioxidants and antitumor agents. Catalyzes the hydrolysis of aromatic epoxide-containing substrates, such as the conversion of 24,25-epoxycucurbitadienol to 24,25-dihydroxycucurbitadienol. The chain is Epoxide hydrolase 3 from Siraitia grosvenorii (Monk's fruit).